The chain runs to 398 residues: Galactose-3-O-sulfotransferase 2 (398 aa).

Topologically, residues methionine 1–cysteine 11 are cytoplasmic. The chain crosses the membrane as a helical; Signal-anchor for type II membrane protein span at residues phenylalanine 12–leucine 29. Over histidine 30 to alanine 398 the chain is Lumenal. 6 N-linked (GlcNAc...) asparagine glycosylation sites follow: asparagine 77, asparagine 133, asparagine 180, asparagine 288, asparagine 330, and asparagine 360.

It belongs to the galactose-3-O-sulfotransferase family.

It localises to the golgi apparatus. The protein localises to the golgi stack membrane. Its pathway is protein modification; carbohydrate sulfation. Its activity is regulated as follows. Strongly inhibited by Cu(2+) and Zn(2+). Its function is as follows. Transfers a sulfate group to the hydroxyl group at C3 of non-reducing beta-galactosyl residues. Acts both on type 1 (Gal-beta-1,3-GlcNAc) and type 2 (Gal-beta-1,4-GlcNAc) chains with similar efficiency. In Sus scrofa (Pig), this protein is Galactose-3-O-sulfotransferase 2 (GAL3ST2).